Here is a 307-residue protein sequence, read N- to C-terminus: MEFVFLGTGAGVPSKGRNVSAIALQLLEERGQTWLFDCGEATQHQILHTSVRPRRIEKIFITHLHGDHIFGLPGLLGSRSFQGGTTPLTVYGPKGIKQFIEVALSVSTTHVKYPLEVVEITEEGTVFEDNEFYVETKRLSHGIECFGYRIVEKDIQGALLVDKLLEMGVKPGPIFKRLKDGEVVELEDGTILNGNEFIGPPQKGRIITILGDTRYCEASRELAQDADVLVHEATFAAEDEQQAYDYFHSTSKQAASIALQANAKRLILTHISSRYQGDTYKELLKEARELFSNTEIATDLKSFPVEK.

Residues His63, His65, Asp67, His68, His141, Asp212, and His270 each contribute to the Zn(2+) site. Residue Asp67 is the Proton acceptor of the active site.

This sequence belongs to the RNase Z family. In terms of assembly, homodimer. Requires Zn(2+) as cofactor.

The catalysed reaction is Endonucleolytic cleavage of RNA, removing extra 3' nucleotides from tRNA precursor, generating 3' termini of tRNAs. A 3'-hydroxy group is left at the tRNA terminus and a 5'-phosphoryl group is left at the trailer molecule.. Its function is as follows. Zinc phosphodiesterase, which displays some tRNA 3'-processing endonuclease activity. Probably involved in tRNA maturation, by removing a 3'-trailer from precursor tRNA. This chain is Ribonuclease Z, found in Bacillus cereus (strain ATCC 14579 / DSM 31 / CCUG 7414 / JCM 2152 / NBRC 15305 / NCIMB 9373 / NCTC 2599 / NRRL B-3711).